Here is a 474-residue protein sequence, read N- to C-terminus: Glutamine synthetase (474 aa).

The region spanning 15-99 is the GS beta-grasp domain; it reads EDVQFIDVRF…MTFFIHDPIT (85 aa). One can recognise a GS catalytic domain in the interval 107 to 474; that stretch reads PRNIAKKAET…PYEFTLYYDI (368 aa). Mg(2+) contacts are provided by E132 and E134. ATP is bound at residue E210. E215 and E223 together coordinate Mg(2+). L-glutamate is bound by residues 267-268 and G268; that span reads NG. H272 provides a ligand contact to Mg(2+). ATP-binding positions include 274–276 and S276; that span reads HSS. L-glutamate is bound by residues R325, E331, and R343. The ATP site is built by R343, R348, and K357. E362 provides a ligand contact to Mg(2+). R364 is a binding site for L-glutamate. Y402 is modified (O-AMP-tyrosine).

This sequence belongs to the glutamine synthetase family. In terms of assembly, oligomer of 12 subunits arranged in the form of two hexagons. Requires Mg(2+) as cofactor.

Its subcellular location is the cytoplasm. It catalyses the reaction L-glutamate + NH4(+) + ATP = L-glutamine + ADP + phosphate + H(+). Its activity is regulated as follows. The activity of this enzyme could be controlled by adenylation under conditions of abundant glutamine. In terms of biological role, catalyzes the ATP-dependent biosynthesis of glutamine from glutamate and ammonia. This chain is Glutamine synthetase, found in Frankia alni.